A 204-amino-acid polypeptide reads, in one-letter code: MPGTLIIITAPSGAGKTTLVSGLLERDPQVNLSVSYTTREPRPGERDGREYHFVDVATFRALRDRGEFLEWAEVHGNYYATSKVWLKQQIATGRDILLEIDWQGAQQVRKSFPDAVGVFILPPSLEELEARLRGRGTDSDDVIMRRLLGARGEMRHVGEFDYVILNNDLQCALDDLVAVVRASRLRYANQHERHLQYFDFLEQD.

In terms of domain architecture, Guanylate kinase-like spans 3–181 (GTLIIITAPS…ALDDLVAVVR (179 aa)). 10 to 17 (APSGAGKT) lines the ATP pocket.

The protein belongs to the guanylate kinase family.

The protein resides in the cytoplasm. It catalyses the reaction GMP + ATP = GDP + ADP. Its function is as follows. Essential for recycling GMP and indirectly, cGMP. In Aromatoleum aromaticum (strain DSM 19018 / LMG 30748 / EbN1) (Azoarcus sp. (strain EbN1)), this protein is Guanylate kinase.